The following is a 441-amino-acid chain: Thymidine phosphorylase (441 aa).

This sequence belongs to the thymidine/pyrimidine-nucleoside phosphorylase family. As to quaternary structure, homodimer.

The enzyme catalyses thymidine + phosphate = 2-deoxy-alpha-D-ribose 1-phosphate + thymine. Its pathway is pyrimidine metabolism; dTMP biosynthesis via salvage pathway; dTMP from thymine: step 1/2. In terms of biological role, the enzymes which catalyze the reversible phosphorolysis of pyrimidine nucleosides are involved in the degradation of these compounds and in their utilization as carbon and energy sources, or in the rescue of pyrimidine bases for nucleotide synthesis. The sequence is that of Thymidine phosphorylase from Chromobacterium violaceum (strain ATCC 12472 / DSM 30191 / JCM 1249 / CCUG 213 / NBRC 12614 / NCIMB 9131 / NCTC 9757 / MK).